Here is a 451-residue protein sequence, read N- to C-terminus: Signal transduction histidine-protein kinase ArlS (451 aa).

2 consecutive transmembrane segments (helical) span residues 11-31 and 156-176; these read IIVT…IIIF and IIAL…SYVF. An HAMP domain is found at 178–231; it reads TQITKPLVSLSNKMIEIRRDGFQNKLQLNTNYEEIDNLANTFNEMMSQIEESFN. In terms of domain architecture, Histidine kinase spans 239–451; sequence DASHELRTPL…NKGTTFKIIF (213 aa). A Phosphohistidine; by autocatalysis modification is found at histidine 242.

Autophosphorylated.

The protein localises to the cell membrane. The catalysed reaction is ATP + protein L-histidine = ADP + protein N-phospho-L-histidine.. Member of the two-component regulatory system ArlS/ArlR involved in the regulation of adhesion, autolysis, multidrug resistance and virulence. ArlS probably functions as a sensor protein kinase which is autophosphorylated at a histidine residue and transfers its phosphate group to ArlR. The sequence is that of Signal transduction histidine-protein kinase ArlS (arlS) from Staphylococcus aureus (strain bovine RF122 / ET3-1).